A 596-amino-acid polypeptide reads, in one-letter code: Protein NRT1/ PTR FAMILY 3.1 (596 aa).

The span at 1–16 shows a compositional bias: basic and acidic residues; the sequence is MEEQSKNKISEEEKQL. The disordered stretch occupies residues 1 to 23; sequence MEEQSKNKISEEEKQLHGRPNRP. A run of 12 helical transmembrane segments spans residues 27–47, 73–93, 98–118, 137–157, 185–205, 213–233, 334–354, 372–392, 416–436, 453–473, 497–517, and 542–562; these read LITMPFIFANEICEKLAVVGF, FAGTSSLTPLLGAFIADSFAG, ITFASIIYQIGMTLLTISAII, TAQLSILYVALLLGALGSGGI, NWYYFCMGAAVLLAVTVLVWI, LGLGIPTVAMFLSVIAFVGGF, MGPIGASGILLITAYAQQGTF, IPAGSMSVFTTVAMLTTIIFY, MGIGFVISIIATLVAGFVEVK, IVPISFLWLIPQYGLHGVAEA, ALFWMAISIGNYVSTLLVTLV, and YFYWLITVLQAVNLVYYLWCA.

This sequence belongs to the major facilitator superfamily. Proton-dependent oligopeptide transporter (POT/PTR) (TC 2.A.17) family. In terms of tissue distribution, expressed in shoots, stems, leaves, flowers and siliques.

Its subcellular location is the membrane. In terms of biological role, may act as an efflux-type nitrite transporter. Not regulated by the PII protein involved in the regulation of nitrite uptake into higher plant chloroplasts. In Arabidopsis thaliana (Mouse-ear cress), this protein is Protein NRT1/ PTR FAMILY 3.1 (NPF3.1).